A 346-amino-acid chain; its full sequence is UPF0718 protein YraQ (346 aa).

9 consecutive transmembrane segments (helical) span residues Pro12–Val32, Met71–Ile91, Leu113–Ala133, Ala146–Phe166, Val167–Ile187, Ala223–Gly243, Ser260–Ala280, Ala296–Leu316, and Trp326–Phe346.

The protein belongs to the UPF0718 family.

It localises to the cell membrane. This chain is UPF0718 protein YraQ (yraQ), found in Escherichia coli (strain K12).